The primary structure comprises 118 residues: Large ribosomal subunit protein uL18 (118 aa).

The protein belongs to the universal ribosomal protein uL18 family. As to quaternary structure, part of the 50S ribosomal subunit; part of the 5S rRNA/L5/L18/L25 subcomplex. Contacts the 5S and 23S rRNAs.

Its function is as follows. This is one of the proteins that bind and probably mediate the attachment of the 5S RNA into the large ribosomal subunit, where it forms part of the central protuberance. The chain is Large ribosomal subunit protein uL18 from Caulobacter sp. (strain K31).